The following is a 182-amino-acid chain: MALNPTHLLWLDMEMTGLSPESDRIIELAIVVTDADLNTVAEGPVLVVHQPDAVMDAMDSWNRGTHGKSGLIDRVKASQLSESDAEAQMLEFVKQHVSPRTSPMCGNSICQDRRFMARHMPELEAFFHYRNLDVSTLKELAKRWRPGLCDAFKKSNKHEALADIYESIDELRYYREHFIRAE.

One can recognise an Exonuclease domain in the interval 8-171; that stretch reads LLWLDMEMTG…ADIYESIDEL (164 aa). Tyrosine 129 is an active-site residue.

The protein belongs to the oligoribonuclease family.

The protein localises to the cytoplasm. Its function is as follows. 3'-to-5' exoribonuclease specific for small oligoribonucleotides. This Thiobacillus denitrificans (strain ATCC 25259 / T1) protein is Oligoribonuclease.